The primary structure comprises 658 residues: Carnitine O-palmitoyltransferase 2, mitochondrial (658 aa).

Residues 1–25 constitute a mitochondrion transit peptide; it reads MVPRLLLRAWPRGPAVGPGAPSRPL. The Mitochondrial matrix segment spans residues 26–178; that stretch reads SAGSGPGQYL…GLLEPEVFHL (153 aa). Lysine 69 is subject to N6-succinyllysine. Lysine 79 is subject to N6-acetyllysine. Lysine 85 is subject to N6-succinyllysine. The note=Mitochondrial inner membrane intramembrane region spans 179–208; the sequence is NPAKSDTITFKRLIRFVPSSLSWYGAYLVN. At 209 to 658 the chain is on the mitochondrial matrix side; the sequence is AYPLDMSQYF…DALEGKSIKS (450 aa). Lysine 239 is modified (N6-acetyllysine; alternate). The residue at position 239 (lysine 239) is an N6-succinyllysine; alternate. Lysine 305 bears the N6-acetyllysine mark. The Proton acceptor role is filled by histidine 372. N6-succinyllysine is present on residues lysine 424 and lysine 439. A CoA-binding site is contributed by 452–464; sequence GKEFLKKQKLSPD. Tyrosine 486, serine 488, and threonine 499 together coordinate (R)-carnitine. Lysine 510 and lysine 544 each carry N6-acetyllysine; alternate. N6-succinyllysine; alternate occurs at positions 510 and 544.

This sequence belongs to the carnitine/choline acetyltransferase family.

The protein localises to the mitochondrion inner membrane. It catalyses the reaction (R)-carnitine + hexadecanoyl-CoA = O-hexadecanoyl-(R)-carnitine + CoA. The catalysed reaction is octanoyl-CoA + (R)-carnitine = O-octanoyl-(R)-carnitine + CoA. The enzyme catalyses decanoyl-CoA + (R)-carnitine = O-decanoyl-(R)-carnitine + CoA. It carries out the reaction dodecanoyl-CoA + (R)-carnitine = O-dodecanoyl-R-carnitine + CoA. It catalyses the reaction tetradecanoyl-CoA + (R)-carnitine = O-tetradecanoyl-(R)-carnitine + CoA. The catalysed reaction is (R)-carnitine + octadecanoyl-CoA = O-octadecanoyl-(R)-carnitine + CoA. The enzyme catalyses eicosanoyl-CoA + (R)-carnitine = O-eicosanoyl-(R)-carnitine + CoA. It carries out the reaction (9Z)-tetradecenoyl-CoA + (R)-carnitine = O-(9Z)-tetradecenoyl-(R)-carnitine + CoA. It catalyses the reaction (5Z)-tetradecenoyl-CoA + (R)-carnitine = O-(5Z)-tetradecenoyl-(R)-carnitine + CoA. The catalysed reaction is (R)-carnitine + (9Z)-octadecenoyl-CoA = O-(9Z)-octadecenoyl-(R)-carnitine + CoA. The enzyme catalyses 4,8-dimethylnonanoyl-CoA + (R)-carnitine = O-4,8-dimethylnonanoyl-(R)-carnitine + CoA. It functions in the pathway lipid metabolism; fatty acid beta-oxidation. Its activity is regulated as follows. Inhibited by trans-2-hexadecanoyl-CoA. Involved in the intramitochondrial synthesis of acylcarnitines from accumulated acyl-CoA metabolites. Reconverts acylcarnitines back into the respective acyl-CoA esters that can then undergo beta-oxidation, an essential step for the mitochondrial uptake of long-chain fatty acids and their subsequent beta-oxidation in the mitochondrion. Active with medium (C8-C12) and long-chain (C14-C18) acyl-CoA esters. The protein is Carnitine O-palmitoyltransferase 2, mitochondrial of Homo sapiens (Human).